The chain runs to 338 residues: Putative peptide import ATP-binding protein BMEII0863 (338 aa).

Positions 10–263 constitute an ABC transporter domain; the sequence is KGLRTVFRTR…PRHPYTMGLL (254 aa). 43 to 50 lines the ATP pocket; it reads GESGSGKS.

This sequence belongs to the ABC transporter superfamily. In terms of assembly, the complex is composed of two ATP-binding proteins (BMEII0863 and BMEII0864), two transmembrane proteins (BMEII0860 and BMEII0861) and a solute-binding protein (BMEII0859).

It localises to the cell inner membrane. Its function is as follows. Probably part of an ABC transporter complex that could be involved in peptide import. Probably responsible for energy coupling to the transport system. In Brucella melitensis biotype 1 (strain ATCC 23456 / CCUG 17765 / NCTC 10094 / 16M), this protein is Putative peptide import ATP-binding protein BMEII0863.